Here is a 354-residue protein sequence, read N- to C-terminus: Release factor glutamine methyltransferase (354 aa).

Residues 174–178 (GSGSG), D197, and N241 contribute to the S-adenosyl-L-methionine site. 241–244 (NPPY) provides a ligand contact to substrate.

It belongs to the protein N5-glutamine methyltransferase family. PrmC subfamily.

It catalyses the reaction L-glutaminyl-[peptide chain release factor] + S-adenosyl-L-methionine = N(5)-methyl-L-glutaminyl-[peptide chain release factor] + S-adenosyl-L-homocysteine + H(+). Methylates the class 1 translation termination release factors RF1/PrfA and RF2/PrfB on the glutamine residue of the universally conserved GGQ motif. This Fusobacterium nucleatum subsp. nucleatum (strain ATCC 25586 / DSM 15643 / BCRC 10681 / CIP 101130 / JCM 8532 / KCTC 2640 / LMG 13131 / VPI 4355) protein is Release factor glutamine methyltransferase.